Reading from the N-terminus, the 191-residue chain is Protein GrpE (191 aa).

Basic and acidic residues predominate over residues 1-11; it reads MTDSSNAHEAE. 2 disordered regions span residues 1–22 and 172–191; these read MTDS…DNEI and KVSK…NNNE.

This sequence belongs to the GrpE family. In terms of assembly, homodimer.

The protein resides in the cytoplasm. Functionally, participates actively in the response to hyperosmotic and heat shock by preventing the aggregation of stress-denatured proteins, in association with DnaK and GrpE. It is the nucleotide exchange factor for DnaK and may function as a thermosensor. Unfolded proteins bind initially to DnaJ; upon interaction with the DnaJ-bound protein, DnaK hydrolyzes its bound ATP, resulting in the formation of a stable complex. GrpE releases ADP from DnaK; ATP binding to DnaK triggers the release of the substrate protein, thus completing the reaction cycle. Several rounds of ATP-dependent interactions between DnaJ, DnaK and GrpE are required for fully efficient folding. The polypeptide is Protein GrpE (Chlamydia abortus (strain DSM 27085 / S26/3) (Chlamydophila abortus)).